Consider the following 450-residue polypeptide: Glucose-6-phosphate isomerase (450 aa).

Glutamate 290 acts as the Proton donor in catalysis. Residues histidine 311 and lysine 425 contribute to the active site.

It belongs to the GPI family.

The protein resides in the cytoplasm. The catalysed reaction is alpha-D-glucose 6-phosphate = beta-D-fructose 6-phosphate. Its pathway is carbohydrate biosynthesis; gluconeogenesis. It functions in the pathway carbohydrate degradation; glycolysis; D-glyceraldehyde 3-phosphate and glycerone phosphate from D-glucose: step 2/4. Its function is as follows. Catalyzes the reversible isomerization of glucose-6-phosphate to fructose-6-phosphate. This chain is Glucose-6-phosphate isomerase, found in Listeria monocytogenes serovar 1/2a (strain ATCC BAA-679 / EGD-e).